A 635-amino-acid polypeptide reads, in one-letter code: Threonine--tRNA ligase (635 aa).

The region spanning 1–58 (MIRVICDNETFELPTGSTAADFASKIKNSHYFAGVVINDQIKDLSTTLSEGDVLKFVT) is the TGS domain. Positions 237 to 528 (DHRVLGTKLD…LIEHFKGRFP (292 aa)) are catalytic. Residues cysteine 328, histidine 379, and histidine 505 each coordinate Zn(2+).

It belongs to the class-II aminoacyl-tRNA synthetase family. Homodimer. Zn(2+) serves as cofactor.

The protein localises to the cytoplasm. It catalyses the reaction tRNA(Thr) + L-threonine + ATP = L-threonyl-tRNA(Thr) + AMP + diphosphate + H(+). Catalyzes the attachment of threonine to tRNA(Thr) in a two-step reaction: L-threonine is first activated by ATP to form Thr-AMP and then transferred to the acceptor end of tRNA(Thr). Also edits incorrectly charged L-seryl-tRNA(Thr). This Chlamydia felis (strain Fe/C-56) (Chlamydophila felis) protein is Threonine--tRNA ligase.